The chain runs to 323 residues: MKILLDTLGSDKGASELIEGAIMALEKKDFNLTIVGNEEENRNIVNKRFEEKIDFVNATETIENNESPTKAIRSKKDSSMRKCFDLLNEDYDGFLSTGSTGALLTGATLITKRLDNVSRPCLMVTVPSLKGEVVVLDVGANVDVTSDLLEQFAKMGYVYSKNILGKEDCKVGLLNIGVEEHKGDSLRLETYQKLSNYPYFKGNVEARDVLKGDFDVVVTDGFSGNILLKTIEGSVEFIKTLAKSKLSKLDEKSQQIIIPMIKSMSSGIDYNSVGSAPFLGTKKPVFKAHGSSNRNAIMSGILTLIKFIEEDVTDKLKKELTNE.

Belongs to the PlsX family. As to quaternary structure, homodimer. Probably interacts with PlsY.

It is found in the cytoplasm. It carries out the reaction a fatty acyl-[ACP] + phosphate = an acyl phosphate + holo-[ACP]. It participates in lipid metabolism; phospholipid metabolism. Functionally, catalyzes the reversible formation of acyl-phosphate (acyl-PO(4)) from acyl-[acyl-carrier-protein] (acyl-ACP). This enzyme utilizes acyl-ACP as fatty acyl donor, but not acyl-CoA. This chain is Phosphate acyltransferase, found in Finegoldia magna (strain ATCC 29328 / DSM 20472 / WAL 2508) (Peptostreptococcus magnus).